The sequence spans 200 residues: Probable molybdenum cofactor guanylyltransferase (200 aa).

GTP is bound by residues 9–11 (LAG), Lys-21, Asp-69, and Asp-100. Residue Asp-100 coordinates Mg(2+).

It belongs to the MobA family. Mg(2+) is required as a cofactor.

Its subcellular location is the cytoplasm. The enzyme catalyses Mo-molybdopterin + GTP + H(+) = Mo-molybdopterin guanine dinucleotide + diphosphate. Functionally, transfers a GMP moiety from GTP to Mo-molybdopterin (Mo-MPT) cofactor (Moco or molybdenum cofactor) to form Mo-molybdopterin guanine dinucleotide (Mo-MGD) cofactor. The sequence is that of Probable molybdenum cofactor guanylyltransferase from Bacillus cereus (strain B4264).